Consider the following 571-residue polypeptide: Urease subunit alpha (571 aa).

The Urease domain maps to 133–571; sequence GGIDTHVHFI…LPLTQRYFLF (439 aa). Residues histidine 138, histidine 140, and lysine 221 each coordinate Ni(2+). Position 221 is an N6-carboxylysine (lysine 221). Histidine 223 lines the substrate pocket. Residues histidine 250 and histidine 276 each contribute to the Ni(2+) site. Residue histidine 324 is the Proton donor of the active site. Position 364 (aspartate 364) interacts with Ni(2+).

It belongs to the metallo-dependent hydrolases superfamily. Urease alpha subunit family. In terms of assembly, heterotrimer of UreA (gamma), UreB (beta) and UreC (alpha) subunits. Three heterotrimers associate to form the active enzyme. Requires Ni cation as cofactor. In terms of processing, carboxylation allows a single lysine to coordinate two nickel ions.

It localises to the cytoplasm. It catalyses the reaction urea + 2 H2O + H(+) = hydrogencarbonate + 2 NH4(+). Its pathway is nitrogen metabolism; urea degradation; CO(2) and NH(3) from urea (urease route): step 1/1. The sequence is that of Urease subunit alpha from Staphylococcus aureus (strain bovine RF122 / ET3-1).